The chain runs to 977 residues: SLIT and NTRK-like protein 3 (977 aa).

An N-terminal signal peptide occupies residues 1 to 26 (MKPSIAEMLHRGRMLWIILLSTIALG). Topologically, residues 29 to 654 (TPIPLIEDSE…SPPGGPVPLS (626 aa)) are extracellular. An N-linked (GlcNAc...) asparagine glycan is attached at Asn68. LRR repeat units follow at residues 78-99 (RPFKLYLQRNSMRKLYTNSFLH), 102-123 (NAVSINLGNNALQDIQTGAFNG), 126-147 (ILKRLYLHENKLDVFRNDTFLG), 150-171 (SLEYLQADYNVIKRIESGAFRN), 174-195 (KLRVLILNDNLIPMLPTNLFKA), and 197-218 (SLTHLDLRGNRLKVLFYRGMLD). The region spanning 232–283 (NPWNCTCEIVQLKSWLERIPYTALVGDITCETPFHFHGKDLREIRKTELCPL) is the LRRCT 1 domain. The disordered stretch occupies residues 325–360 (EYKSSNKQPKPTKQPRTPRPPSTSQALYPGPNQPPI). Residues 364–406 (QTRPPIPIICPTGCTCNLHINDLGLTVNCKERGFNNISELLPR) enclose the LRRNT domain. 6 LRR repeats span residues 409–430 (NAKKLYLSSNLIQKIYRSDFWN), 433–454 (SLDLLHLGNNRISYVQDGAFIN), 457–478 (NLKSLFLNGNDIEKLTPGMFRG), 481–502 (SLHYLYFEFNVIREIQPAAFSL), 505–526 (NLKLLFLNNNLLRTLPTDAFAG), and 528–549 (SLARLNLRKNYFLYLPVAGVLE). The region spanning 562–613 (NPWDCTCDLVPFKQWIETISSVSVVGDVLCRSPENLTHRDVRTIELEVLCPE) is the LRRCT 2 domain. N-linked (GlcNAc...) asparagine glycosylation occurs at Asn596. A helical membrane pass occupies residues 655–675 (VLILSLLVLFFSAVFVAAGLF). At 676–977 (AYVLRRRRKK…EVLEKTTYRF (302 aa)) the chain is on the cytoplasmic side. Disordered stretches follow at residues 708–735 (LFEDGGGGGGGSGGGGRPTLSSPEKAPP) and 761–790 (EEEVAVSSAQEAGSAERGGPGTQPPGMGEA). The span at 711–724 (DGGGGGGGSGGGGR) shows a compositional bias: gly residues. Positions 765 to 775 (AVSSAQEAGSA) are enriched in low complexity.

This sequence belongs to the SLITRK family. Expressed in the occipital lobe of the cerebral cortex of the brain. Expressed at higher levels in some astrocytic brain tumors such as astrocytomas, oligodendrogliomas, glioblastomas, gangliogliomas and primitive neuroectodermal tumors.

The protein resides in the membrane. Functionally, suppresses neurite outgrowth. The protein is SLIT and NTRK-like protein 3 (SLITRK3) of Homo sapiens (Human).